A 201-amino-acid polypeptide reads, in one-letter code: Lipopolysaccharide core heptose(II)-phosphate phosphatase (201 aa).

The N-terminal stretch at 1–35 (MLAFTLRFIKNKRYLATLAGALVIIAGLTSQHAWS) is a signal peptide.

It belongs to the phosphoglycerate mutase family. Ais subfamily.

It localises to the periplasm. Its pathway is bacterial outer membrane biogenesis; lipopolysaccharide metabolism. In terms of biological role, catalyzes the dephosphorylation of heptose(II) of the outer membrane lipopolysaccharide core. The sequence is that of Lipopolysaccharide core heptose(II)-phosphate phosphatase from Salmonella newport (strain SL254).